The chain runs to 322 residues: HPr kinase/phosphorylase (322 aa).

Catalysis depends on residues H146 and K167. 161–168 (GDSGLGKS) is an ATP binding site. S168 provides a ligand contact to Mg(2+). D185 (proton acceptor; for phosphorylation activity. Proton donor; for dephosphorylation activity) is an active-site residue. The segment at 209–218 (LEVRGLGLLD) is important for the catalytic mechanism of both phosphorylation and dephosphorylation. E210 is a Mg(2+) binding site. The active site involves R250. An important for the catalytic mechanism of dephosphorylation region spans residues 271 to 276 (QVAAGR).

This sequence belongs to the HPrK/P family. Homohexamer. The cofactor is Mg(2+).

It carries out the reaction [HPr protein]-L-serine + ATP = [HPr protein]-O-phospho-L-serine + ADP + H(+). It catalyses the reaction [HPr protein]-O-phospho-L-serine + phosphate + H(+) = [HPr protein]-L-serine + diphosphate. In terms of biological role, catalyzes the ATP- as well as the pyrophosphate-dependent phosphorylation of a specific serine residue in HPr, a phosphocarrier protein of the phosphoenolpyruvate-dependent sugar phosphotransferase system (PTS). HprK/P also catalyzes the pyrophosphate-producing, inorganic phosphate-dependent dephosphorylation (phosphorolysis) of seryl-phosphorylated HPr (P-Ser-HPr). This Burkholderia ambifaria (strain ATCC BAA-244 / DSM 16087 / CCUG 44356 / LMG 19182 / AMMD) (Burkholderia cepacia (strain AMMD)) protein is HPr kinase/phosphorylase.